The sequence spans 225 residues: Holliday junction branch migration complex subunit RuvA (225 aa).

Residues 1-68 (MIGWLQGQKV…DDGSSLFGFP (68 aa)) are domain I. The domain II stretch occupies residues 69 to 147 (ERRERDMFRT…EFSCRDPGMS (79 aa)). The interval 148-158 (LVDNGVIDSHQ) is flexible linker. The interval 159 to 225 (LKDSSLHELQ…SLRWLSQEAA (67 aa)) is domain III.

This sequence belongs to the RuvA family. As to quaternary structure, homotetramer. Forms an RuvA(8)-RuvB(12)-Holliday junction (HJ) complex. HJ DNA is sandwiched between 2 RuvA tetramers; dsDNA enters through RuvA and exits via RuvB. An RuvB hexamer assembles on each DNA strand where it exits the tetramer. Each RuvB hexamer is contacted by two RuvA subunits (via domain III) on 2 adjacent RuvB subunits; this complex drives branch migration. In the full resolvosome a probable DNA-RuvA(4)-RuvB(12)-RuvC(2) complex forms which resolves the HJ.

The protein localises to the cytoplasm. The RuvA-RuvB-RuvC complex processes Holliday junction (HJ) DNA during genetic recombination and DNA repair, while the RuvA-RuvB complex plays an important role in the rescue of blocked DNA replication forks via replication fork reversal (RFR). RuvA specifically binds to HJ cruciform DNA, conferring on it an open structure. The RuvB hexamer acts as an ATP-dependent pump, pulling dsDNA into and through the RuvAB complex. HJ branch migration allows RuvC to scan DNA until it finds its consensus sequence, where it cleaves and resolves the cruciform DNA. In Prochlorococcus marinus (strain MIT 9313), this protein is Holliday junction branch migration complex subunit RuvA.